The primary structure comprises 202 residues: T-cell surface glycoprotein CD3 epsilon chain (202 aa).

Residues 1 to 21 (MQSRNLWRILGLCLLSVGAWG) form the signal peptide. At 22-122 (QDEDFKASDD…VCANCIEVNL (101 aa)) the chain is on the extracellular side. One can recognise an Ig-like domain in the interval 37–107 (PEKRFKVSIS…ADSIKEKSYL (71 aa)). A disulfide bridge links C54 with C96. A helical transmembrane segment spans residues 123–143 (MAVVTIIVADICLTLGLLLMV). The Cytoplasmic segment spans residues 144 to 202 (YYWSKTRKANAKPVMRGTGAGSRPRGQNKEKPPPVPNPDYEPIRKGQQDLYSGLNQRGI). The disordered stretch occupies residues 156–202 (PVMRGTGAGSRPRGQNKEKPPPVPNPDYEPIRKGQQDLYSGLNQRGI). Residues 170–187 (QNKEKPPPVPNPDYEPIR) are NUMB-binding region. The region spanning 173–200 (EKPPPVPNPDYEPIRKGQQDLYSGLNQR) is the ITAM domain. Positions 174–181 (KPPPVPNP) are proline-rich sequence. Phosphotyrosine occurs at positions 183 and 194. A compositionally biased stretch (polar residues) spans 192 to 202 (DLYSGLNQRGI).

As to quaternary structure, the TCR-CD3 complex is composed of a CD3D/CD3E and a CD3G/CD3E heterodimers that preferentially associate with TCRalpha and TCRbeta, respectively, to form TCRalpha/CD3E/CD3G and TCRbeta/CD3G/CD3E trimers. In turn, the hexamer interacts with CD3Z homodimer to form the TCR-CD3 complex. Alternatively, TCRalpha and TCRbeta can be replaced by TCRgamma and TCRdelta. Interacts with CD6. Interacts (via Proline-rich sequence) with NCK1; the interaction is ligand dependent but independent of tyrosine kinase activation. In terms of processing, phosphorylated on Tyr residues after T-cell receptor triggering by LCK in association with CD4/CD8.

The protein localises to the cell membrane. Functionally, part of the TCR-CD3 complex present on T-lymphocyte cell surface that plays an essential role in adaptive immune response. When antigen presenting cells (APCs) activate T-cell receptor (TCR), TCR-mediated signals are transmitted across the cell membrane by the CD3 chains CD3D, CD3E, CD3G and CD3Z. All CD3 chains contain immunoreceptor tyrosine-based activation motifs (ITAMs) in their cytoplasmic domain. Upon TCR engagement, these motifs become phosphorylated by Src family protein tyrosine kinases LCK and FYN, resulting in the activation of downstream signaling pathways. In addition of this role of signal transduction in T-cell activation, CD3E plays an essential role in correct T-cell development. Also participates in internalization and cell surface down-regulation of TCR-CD3 complexes via endocytosis sequences present in CD3E cytosolic region. In addition to its role as a TCR coreceptor, it serves as a receptor for ITPRIPL1. Ligand recognition inhibits T-cell activation by promoting interaction with NCK1, which prevents CD3E-ZAP70 interaction and blocks the ERK-NFkB signaling cascade and calcium influx. This is T-cell surface glycoprotein CD3 epsilon chain (CD3E) from Canis lupus familiaris (Dog).